A 313-amino-acid polypeptide reads, in one-letter code: tRNA dimethylallyltransferase (313 aa).

10–17 (GPTASGKT) contacts ATP. 12–17 (TASGKT) serves as a coordination point for substrate. 3 interaction with substrate tRNA regions span residues 35-38 (DSAM), 159-163 (QRIQR), and 240-245 (RCVGYR).

It belongs to the IPP transferase family. Monomer. Mg(2+) serves as cofactor.

It catalyses the reaction adenosine(37) in tRNA + dimethylallyl diphosphate = N(6)-dimethylallyladenosine(37) in tRNA + diphosphate. Catalyzes the transfer of a dimethylallyl group onto the adenine at position 37 in tRNAs that read codons beginning with uridine, leading to the formation of N6-(dimethylallyl)adenosine (i(6)A). The chain is tRNA dimethylallyltransferase from Legionella pneumophila (strain Lens).